We begin with the raw amino-acid sequence, 346 residues long: Glycerol-3-phosphate dehydrogenase [NAD(P)+] (346 aa).

5 residues coordinate NADPH: serine 11, tryptophan 12, histidine 32, arginine 33, and lysine 106. Positions 106, 137, and 139 each coordinate sn-glycerol 3-phosphate. Alanine 141 provides a ligand contact to NADPH. Sn-glycerol 3-phosphate is bound by residues lysine 193, aspartate 246, serine 256, arginine 257, and asparagine 258. The active-site Proton acceptor is lysine 193. An NADPH-binding site is contributed by arginine 257. NADPH contacts are provided by valine 281 and glutamate 283.

The protein belongs to the NAD-dependent glycerol-3-phosphate dehydrogenase family.

The protein resides in the cytoplasm. It catalyses the reaction sn-glycerol 3-phosphate + NAD(+) = dihydroxyacetone phosphate + NADH + H(+). The catalysed reaction is sn-glycerol 3-phosphate + NADP(+) = dihydroxyacetone phosphate + NADPH + H(+). Its pathway is membrane lipid metabolism; glycerophospholipid metabolism. Functionally, catalyzes the reduction of the glycolytic intermediate dihydroxyacetone phosphate (DHAP) to sn-glycerol 3-phosphate (G3P), the key precursor for phospholipid synthesis. The polypeptide is Glycerol-3-phosphate dehydrogenase [NAD(P)+] (Bacillus licheniformis (strain ATCC 14580 / DSM 13 / JCM 2505 / CCUG 7422 / NBRC 12200 / NCIMB 9375 / NCTC 10341 / NRRL NRS-1264 / Gibson 46)).